We begin with the raw amino-acid sequence, 273 residues long: Glutamate 5-kinase (273 aa).

Residue K15 participates in ATP binding. Residues S55, D142, and N158 each contribute to the substrate site. ATP is bound by residues 178–179 (SD) and 220–226 (TGGMLSK).

This sequence belongs to the glutamate 5-kinase family.

It is found in the cytoplasm. It catalyses the reaction L-glutamate + ATP = L-glutamyl 5-phosphate + ADP. Its pathway is amino-acid biosynthesis; L-proline biosynthesis; L-glutamate 5-semialdehyde from L-glutamate: step 1/2. Functionally, catalyzes the transfer of a phosphate group to glutamate to form L-glutamate 5-phosphate. The chain is Glutamate 5-kinase from Streptococcus pyogenes serotype M4 (strain MGAS10750).